Reading from the N-terminus, the 72-residue chain is Prokaryotic ubiquitin-like protein Pup (72 aa).

Residues 1 to 10 (MATRDSGGGQ) show a composition bias toward gly residues. Residues 1 to 41 (MATRDSGGGQQRADRRAEEIDDVATEDTSASDLKERHEKLS) form a disordered region. Positions 27–61 (DTSASDLKERHEKLSEDVDSLLDEIDDVLEENAEE) form a coiled coil. The interval 28-66 (TSASDLKERHEKLSEDVDSLLDEIDDVLEENAEEFVKGY) is ARC ATPase binding. Positions 32–41 (DLKERHEKLS) are enriched in basic and acidic residues. At Gln-72 the chain carries Deamidated glutamine. Gln-72 is covalently cross-linked (Isoglutamyl lysine isopeptide (Gln-Lys) (interchain with K-? in acceptor proteins)).

The protein belongs to the prokaryotic ubiquitin-like protein family. Strongly interacts with the proteasome-associated ATPase ARC through a hydrophobic interface; the interacting region of Pup lies in its C-terminal half. There is one Pup binding site per ARC hexamer ring. Post-translationally, is modified by deamidation of its C-terminal glutamine to glutamate by the deamidase Dop, a prerequisite to the subsequent pupylation process.

It participates in protein degradation; proteasomal Pup-dependent pathway. Functionally, protein modifier that is covalently attached to lysine residues of substrate proteins, thereby targeting them for proteasomal degradation. The tagging system is termed pupylation. The chain is Prokaryotic ubiquitin-like protein Pup from Frankia casuarinae (strain DSM 45818 / CECT 9043 / HFP020203 / CcI3).